We begin with the raw amino-acid sequence, 465 residues long: Ribulose bisphosphate carboxylase large chain (465 aa).

At Lys4 the chain carries N6,N6,N6-trimethyllysine. Positions 113 and 163 each coordinate substrate. Catalysis depends on Lys165, which acts as the Proton acceptor. Lys167 is a binding site for substrate. Residues Lys191, Asp193, and Glu194 each contribute to the Mg(2+) site. Lys191 is subject to N6-carboxylysine. Residue His284 is the Proton acceptor of the active site. Substrate contacts are provided by Arg285, His317, and Ser369.

Belongs to the RuBisCO large chain family. Type I subfamily. In terms of assembly, heterohexadecamer of 8 large chains and 8 small chains; disulfide-linked. The disulfide link is formed within the large subunit homodimers. The cofactor is Mg(2+). The disulfide bond which can form in the large chain dimeric partners within the hexadecamer appears to be associated with oxidative stress and protein turnover.

It is found in the plastid. The protein resides in the chloroplast. The catalysed reaction is 2 (2R)-3-phosphoglycerate + 2 H(+) = D-ribulose 1,5-bisphosphate + CO2 + H2O. It carries out the reaction D-ribulose 1,5-bisphosphate + O2 = 2-phosphoglycolate + (2R)-3-phosphoglycerate + 2 H(+). Its function is as follows. RuBisCO catalyzes two reactions: the carboxylation of D-ribulose 1,5-bisphosphate, the primary event in carbon dioxide fixation, as well as the oxidative fragmentation of the pentose substrate in the photorespiration process. Both reactions occur simultaneously and in competition at the same active site. The polypeptide is Ribulose bisphosphate carboxylase large chain (Acer saccharum (Sugar maple)).